Here is a 195-residue protein sequence, read N- to C-terminus: GTP-dependent dephospho-CoA kinase (195 aa).

Residues D49, V50, D68, E127, and D150 each contribute to the GTP site.

Belongs to the GTP-dependent DPCK family.

The enzyme catalyses 3'-dephospho-CoA + GTP = GDP + CoA + H(+). It functions in the pathway cofactor biosynthesis; coenzyme A biosynthesis. Its function is as follows. Catalyzes the GTP-dependent phosphorylation of the 3'-hydroxyl group of dephosphocoenzyme A to form coenzyme A (CoA). In Methanosarcina barkeri (strain Fusaro / DSM 804), this protein is GTP-dependent dephospho-CoA kinase.